The following is a 136-amino-acid chain: Small ribosomal subunit protein eS17A (136 aa).

The protein belongs to the eukaryotic ribosomal protein eS17 family. In terms of assembly, component of the small ribosomal subunit (SSU). Mature yeast ribosomes consist of a small (40S) and a large (60S) subunit. The 40S small subunit contains 1 molecule of ribosomal RNA (18S rRNA) and 33 different proteins (encoded by 57 genes). The large 60S subunit contains 3 rRNA molecules (25S, 5.8S and 5S rRNA) and 46 different proteins (encoded by 81 genes).

The protein localises to the cytoplasm. In terms of biological role, component of the ribosome, a large ribonucleoprotein complex responsible for the synthesis of proteins in the cell. The small ribosomal subunit (SSU) binds messenger RNAs (mRNAs) and translates the encoded message by selecting cognate aminoacyl-transfer RNA (tRNA) molecules. The large subunit (LSU) contains the ribosomal catalytic site termed the peptidyl transferase center (PTC), which catalyzes the formation of peptide bonds, thereby polymerizing the amino acids delivered by tRNAs into a polypeptide chain. The nascent polypeptides leave the ribosome through a tunnel in the LSU and interact with protein factors that function in enzymatic processing, targeting, and the membrane insertion of nascent chains at the exit of the ribosomal tunnel. This is Small ribosomal subunit protein eS17A from Saccharomyces cerevisiae (strain ATCC 204508 / S288c) (Baker's yeast).